Consider the following 341-residue polypeptide: Follistatin (341 aa).

An N-terminal signal peptide occupies residues 1–29; the sequence is MLNERIQPGMIFLLTVSLCHFMEYRAVQA. A TB domain is found at 30 to 103; that stretch reads GNCWLQQSKN…TCENVDCGPG (74 aa). Cystine bridges form between Cys32–Cys55, Cys42–Cys88, Cys56–Cys91, Cys95–Cys106, Cys100–Cys116, Cys118–Cys150, Cys122–Cys143, and Cys132–Cys164. Asn72 carries an N-linked (GlcNAc...) asparagine glycan. The Follistatin-like 1 domain maps to 94–117; the sequence is TCENVDCGPGKKCKMNKKNKPRCV. 3 consecutive Kazal-like domains span residues 100-166, 186-241, and 264-318; these read CGPG…KCKK, NAYC…KCIK, and RGRC…SCNS. N-linked (GlcNAc...) asparagine glycosylation occurs at Asn124. Residues 167 to 190 enclose the Follistatin-like 2 domain; sequence TCRDVLCPGSSSCVVDQTNNAYCV. 3 disulfides stabilise this stretch: Cys192/Cys225, Cys196/Cys218, and Cys207/Cys239. One can recognise a Follistatin-like 3 domain in the interval 244–268; the sequence is SCEDIQCSAGKKCLWDSRVGRGRCA. Cystine bridges form between Cys270-Cys302, Cys274-Cys295, and Cys284-Cys316. Asn288 carries N-linked (GlcNAc...) asparagine glycosylation. The segment covering 321-333 has biased composition (acidic residues); sequence EDTEEEEEEEEPD. A disordered region spans residues 321–341; sequence EDTEEEEEEEEPDYSFVISSW.

In terms of assembly, monomer. As to expression, spemann organizer and notochord.

It localises to the secreted. In terms of biological role, binds directly to activin and functions as an activin antagonist which plays a role in neural induction. The short isoform is a more potent inhibitor of activin than the long isoform. Specific inhibitor of the biosynthesis and secretion of pituitary follicle stimulating hormone (FSH). The chain is Follistatin (fst) from Xenopus laevis (African clawed frog).